Consider the following 159-residue polypeptide: Type IV major alpha-pilin (159 aa).

Positions 1-6 (MNAQKG) are cleaved as a propeptide — leader sequence. Phe7 is subject to N-methylphenylalanine. A helical membrane pass occupies residues 7–27 (FTLIELMIVIAIIGILAAIAL). Positions 64-87 (VLSEESSTSKENIGLTSSETSTKP) are disordered. Positions 67 to 87 (EESSTSKENIGLTSSETSTKP) are enriched in polar residues. Cys137 and Cys156 are disulfide-bonded.

It belongs to the N-Me-Phe pilin family. Major component of the type IV pilus (T4P) that plays a role in surface and attachment to the host epithelial tissues.

Its subcellular location is the fimbrium. It is found in the membrane. The polypeptide is Type IV major alpha-pilin (tfpI) (Moraxella bovis).